The following is a 447-amino-acid chain: Asparagine--tRNA ligase (447 aa).

Belongs to the class-II aminoacyl-tRNA synthetase family. Homodimer.

It localises to the cytoplasm. It carries out the reaction tRNA(Asn) + L-asparagine + ATP = L-asparaginyl-tRNA(Asn) + AMP + diphosphate + H(+). In Lactococcus lactis subsp. lactis (strain IL1403) (Streptococcus lactis), this protein is Asparagine--tRNA ligase.